The sequence spans 3914 residues: Trichosetin synthetase PKS-NRPS1 (3914 aa).

The Ketosynthase family 3 (KS3) domain maps to 4–420; it reads NEPIAIIGSA…GTNAHAIIEA (417 aa). Catalysis depends on for beta-ketoacyl synthase activity residues Cys-177, His-301, and His-340. Positions 525-847 are malonyl-CoA:ACP transacylase (MAT) domain; that stretch reads VLTGQGAQWP…REKDDIQQFA (323 aa). An N-terminal hotdog fold region spans residues 913–1047; that stretch reads HPILGRRCHD…AHVKASLSVP (135 aa). The segment at 913–1214 is dehydratase (DH) domain; it reads HPILGRRCHD…MELVPFSPAT (302 aa). The region spanning 913 to 1216 is the PKS/mFAS DH domain; it reads HPILGRRCHD…LVPFSPATPE (304 aa). His-946 acts as the Proton acceptor; for dehydratase activity in catalysis. Positions 1062 to 1216 are C-terminal hotdog fold; the sequence is LRKVEVDRFY…LVPFSPATPE (155 aa). The active-site Proton donor; for dehydratase activity is Asp-1122. The segment at 1364–1593 is methyltransferase (MT) domain; sequence EGFGLDLVNK…DLPETKSTEL (230 aa). A ketoreductase (KR) domain region spans residues 2083–2255; that stretch reads TFLLIGLSGE…VAASSIDISS (173 aa). Positions 2356–2436 constitute a Carrier 1 domain; it reads LADVKTKADA…DLIEESLNLI (81 aa). The residue at position 2396 (Ser-2396) is an O-(pantetheine 4'-phosphoryl)serine. The tract at residues 2447–2518 is disordered; it reads EAGSTPTTQP…DSTDNSTPLK (72 aa). The span at 2481-2500 shows a compositional bias: polar residues; the sequence is QQTGSDSSRSPIDTPLTSME. A condensation (C) domain region spans residues 2529-2956; it reads SYGQAGFWFL…VQGTNKAADT (428 aa). The segment at 2991–3388 is adenylation (A) (KR) domain; the sequence is QTIQANSTKV…LLFCDGRLED (398 aa). A Carrier 2 domain is found at 3502 to 3579; that stretch reads GTLTVAEQRL…TMAVVLESCG (78 aa). Ser-3539 is modified (O-(pantetheine 4'-phosphoryl)serine). The segment at 3615 to 3831 is reductase (RED) domain; it reads LTGSAGYLGR…VLPTGDIVKA (217 aa).

The protein in the C-terminal section; belongs to the NRP synthetase family.

The enzyme catalyses L-serine + 7 malonyl-CoA + acetyl-CoA + 2 S-adenosyl-L-methionine + ATP + 8 NADPH + 11 H(+) = (5S)-3-[(2E,6R,8E,10E,12E)-2,6-dimethyltetradeca-2,8,10,12-tetraenoyl]-5-(hydroxymethyl)pyrrolidine-2,4-dione + AMP + 2 S-adenosyl-L-homocysteine + 7 CO2 + diphosphate + 8 NADP(+) + 8 CoA + 6 H2O. Its pathway is mycotoxin biosynthesis. Functionally, hybrid PKS-NRPS synthetase; part of the gene cluster that mediates the biosynthesis of trichosetin, a trans-fused decalin-containing tetramic acid with antimicrobial activity. The PKS module of PKS-NRPS1 together with the enoylreductase (ER) catalyze the formation of the polyketide unit which is then conjugated to L-serine by the condensation domain of the PKS-NRPS1 NRPS module. Activity of the Dieckmann cyclase domain (RED) results in release of the Dieckmann product intermediate. Diels-Alderase (DA) is involved in endo-selective Diels-Alder cycloaddition to form the decalin ring, leading to the production of N-desmethylequisetin also called trichosetin. The cluster does not contain the equisetin N-methyltransferase and consequently, trichosetin is isolated as final product. This Gibberella fujikuroi (strain CBS 195.34 / IMI 58289 / NRRL A-6831) (Bakanae and foot rot disease fungus) protein is Trichosetin synthetase PKS-NRPS1.